The sequence spans 322 residues: MMIKNKKKLLFLCLLVILIATAYISFVTGTIKLSFNDLITKFTTGNNEAVDSIIDLRLPRILIALMVGAMLAVSGALLQAALQNPLAEANIIGVSSGALIMRALCMLFIPQLYFYLPLLSFIGGLIPFLIIILLHSKFRFNAVSMILVGVALFVLLNGVLEILTQNPLMKIPQGLTMKIWSDVYILAVSALLGLILTLLLSPKLNLLNLDDIQARSIGFNIDRYRWLTGLLAVFLASATVAIVGQLAFLGIIVPHVVRKLVGGNYRVLIPFSTVIGAWLLLVADLLGRVIQPPLEIPANAILMIVGGPMLIYLICQSQRNRI.

The next 9 membrane-spanning stretches (helical) occupy residues 9–29 (LLFL…FVTG), 61–81 (ILIA…LQAA), 89–109 (ANII…MLFI), 114–134 (FYLP…IILL), 143–163 (VSMI…LEIL), 179–199 (IWSD…LTLL), 233–253 (VFLA…GIIV), 267–287 (VLIP…DLLG), and 294–314 (LEIP…IYLI).

It belongs to the binding-protein-dependent transport system permease family. FecCD subfamily.

Its subcellular location is the cell membrane. Its function is as follows. Part of the binding-protein-dependent transport system for heme-iron. Responsible for the translocation of the substrate across the membrane. This chain is Probable heme-iron transport system permease protein IsdF (isdF), found in Staphylococcus aureus (strain MSSA476).